The sequence spans 547 residues: Heme-binding protein A (547 aa).

A signal peptide spans 1–18 (MKLKATLTLAAATLVLAA). A lipid anchor (N-palmitoyl cysteine) is attached at cysteine 19. Residue cysteine 19 is the site of S-diacylglycerol cysteine attachment.

This sequence belongs to the bacterial solute-binding protein 5 family.

It localises to the cell inner membrane. Important role in heme acquisition or metabolism. The chain is Heme-binding protein A (hbpA) from Haemophilus influenzae (strain ATCC 51907 / DSM 11121 / KW20 / Rd).